Here is a 292-residue protein sequence, read N- to C-terminus: Protein LRATD1 (292 aa).

Residue serine 38 is modified to Phosphoserine. Residues 133-228 (PATEQPAPAP…CRFGKREFKA (96 aa)) enclose the LRAT domain.

Belongs to the LRATD family.

The protein resides in the cytoplasm. Functionally, may play a role in cell morphology and motility. This Mus musculus (Mouse) protein is Protein LRATD1.